Consider the following 144-residue polypeptide: Large ribosomal subunit protein uL15 (144 aa).

Residues 1 to 54 (MKLNTIKPAEGAKHARRRVGRGIGSGLGKTGGRGHKGQKSRAGGFHKVGFEGGQ) form a disordered region. The span at 21 to 31 (RGIGSGLGKTG) shows a compositional bias: gly residues.

Belongs to the universal ribosomal protein uL15 family. In terms of assembly, part of the 50S ribosomal subunit.

Binds to the 23S rRNA. The sequence is that of Large ribosomal subunit protein uL15 from Methylobacillus flagellatus (strain ATCC 51484 / DSM 6875 / VKM B-1610 / KT).